We begin with the raw amino-acid sequence, 173 residues long: Ribosome maturation factor RimM (173 aa).

The region spanning 93-166 (EDEYLVSDMI…KMLVDTIEGM (74 aa)) is the PRC barrel domain.

This sequence belongs to the RimM family. In terms of assembly, binds ribosomal protein uS19.

The protein localises to the cytoplasm. An accessory protein needed during the final step in the assembly of 30S ribosomal subunit, possibly for assembly of the head region. Essential for efficient processing of 16S rRNA. May be needed both before and after RbfA during the maturation of 16S rRNA. It has affinity for free ribosomal 30S subunits but not for 70S ribosomes. The protein is Ribosome maturation factor RimM of Fusobacterium nucleatum subsp. nucleatum (strain ATCC 25586 / DSM 15643 / BCRC 10681 / CIP 101130 / JCM 8532 / KCTC 2640 / LMG 13131 / VPI 4355).